Reading from the N-terminus, the 255-residue chain is Cyclase-like protein 1 (255 aa).

The first 24 residues, 1 to 24 (MTRSVSFPLFLFAVVLSLSSSLLA), serve as a signal peptide directing secretion.

Belongs to the Cyclase 1 superfamily.

The protein localises to the secreted. The protein resides in the extracellular space. Its subcellular location is the extracellular matrix. In terms of biological role, acts as a negative regulator of fumonisin B1- and pathogen-induced programmed cell death (PCD), and regulates pathogen-induced symptom development. May function redundantly with CYCLASE2 for normal plant growth, development and viability. This chain is Cyclase-like protein 1, found in Arabidopsis thaliana (Mouse-ear cress).